A 580-amino-acid chain; its full sequence is Acyl-coenzyme A synthetase ACSM4, mitochondrial (580 aa).

A mitochondrion-targeting transit peptide spans 1 to 22; the sequence is MKVLLRCQRLRFIWLAKPAGRH. Residues 229–237, 368–373, Asp-455, Arg-470, and Lys-566 contribute to the ATP site; these read TSGTTGSPK and EGYGQT.

The protein belongs to the ATP-dependent AMP-binding enzyme family. The cofactor is Mg(2+). Requires Mn(2+) as cofactor. In terms of tissue distribution, detected in adult olfactory epithelium.

The protein resides in the mitochondrion. It catalyses the reaction a medium-chain fatty acid + ATP + CoA = a medium-chain fatty acyl-CoA + AMP + diphosphate. The enzyme catalyses hexanoate + ATP + CoA = hexanoyl-CoA + AMP + diphosphate. The catalysed reaction is octanoate + ATP + CoA = octanoyl-CoA + AMP + diphosphate. It carries out the reaction decanoate + ATP + CoA = decanoyl-CoA + AMP + diphosphate. It catalyses the reaction dodecanoate + ATP + CoA = dodecanoyl-CoA + AMP + diphosphate. Functionally, catalyzes the activation of fatty acids by CoA to produce an acyl-CoA, the first step in fatty acid metabolism. Capable of activating medium-chain fatty acids with a preference for C6-12 fatty acids. The sequence is that of Acyl-coenzyme A synthetase ACSM4, mitochondrial (Acsm4) from Rattus norvegicus (Rat).